We begin with the raw amino-acid sequence, 235 residues long: UPF0702 transmembrane protein YdfS (235 aa).

2 consecutive transmembrane segments (helical) span residues 32 to 52 (MTIF…GLAY) and 60 to 80 (NMAI…FLSI).

Belongs to the UPF0702 family.

It is found in the cell membrane. This Bacillus subtilis (strain 168) protein is UPF0702 transmembrane protein YdfS (ydfS).